The following is a 313-amino-acid chain: 7,8-didemethyl-8-hydroxy-5-deazariboflavin synthase (313 aa).

The Radical SAM core domain occupies 4 to 235 (ITYSPAYTLV…AEITLQIPPN (232 aa)). [4Fe-4S] cluster contacts are provided by Cys18, Cys22, and Cys25.

Belongs to the radical SAM superfamily. CofG family. As to quaternary structure, consists of two subunits, CofG and CofH. It depends on [4Fe-4S] cluster as a cofactor.

The catalysed reaction is 5-amino-5-(4-hydroxybenzyl)-6-(D-ribitylimino)-5,6-dihydrouracil + S-adenosyl-L-methionine = 7,8-didemethyl-8-hydroxy-5-deazariboflavin + 5'-deoxyadenosine + L-methionine + NH4(+) + H(+). The protein operates within cofactor biosynthesis; coenzyme F0 biosynthesis. Its function is as follows. Catalyzes the radical-mediated synthesis of 7,8-didemethyl-8-hydroxy-5-deazariboflavin from 5-amino-5-(4-hydroxybenzyl)-6-(D-ribitylimino)-5,6-dihydrouracil. This chain is 7,8-didemethyl-8-hydroxy-5-deazariboflavin synthase, found in Synechocystis sp. (strain ATCC 27184 / PCC 6803 / Kazusa).